Consider the following 404-residue polypeptide: MKMEEAVGKVEELIESEAPPKASEQETAKEEDGSVELESQVQKDGVADSTVISSMPCLLMELRRDSSESQLASTESDKPTTGRVYESDSSNHCMLSPSSSGHLADSDTLSSAEENEPSQAETAVEGDPSGVSGATVGRKSRRSRSESETSTMAAKKNRQSSDKQNGRVAKVKGHRSQKHKERIRLLRQKREAAARKKYNLLQDSSTSDSDLTCDSSTSSSDDDEEVSGSSKTITAEIPDGPPVVAHYDMSDTNSDPEVVNVDNLLAAAVVQEHSNSVGGQDTGATWRTSGLLEELNAEAGHLDPGFLASDKTSAGNAPLNEEINIASSDSEVEIVGVQEHARCVHPRGGVIQSVSSWKHGSGTQYVSTRQTQSWTAVTPQQTWASPAEVVDLTLDEDSRRKYLL.

Basic and acidic residues-rich tracts occupy residues 1-12 (MKMEEAVGKVEE) and 23-32 (SEQETAKEED). Disordered stretches follow at residues 1 to 50 (MKME…ADST) and 63 to 255 (RRDS…TNSD). Ser-66 is subject to Phosphoserine. The residue at position 67 (Ser-67) is a Phosphoserine; by AMPK. The span at 87-121 (SDSSNHCMLSPSSSGHLADSDTLSSAEENEPSQAE) shows a compositional bias: polar residues. Residues Ser-143, Ser-145, and Ser-147 each carry the phosphoserine modification. Residues 169-187 (AKVKGHRSQKHKERIRLLR) show a composition bias toward basic residues. Residues 175–200 (RSQKHKERIRLLRQKREAAARKKYNL) adopt a coiled-coil conformation. Residues 202 to 226 (QDSSTSDSDLTCDSSTSSSDDDEEV) form a required for interaction with CSNK2B region. Low complexity predominate over residues 203-219 (DSSTSDSDLTCDSSTSS). Phosphoserine is present on residues Ser-327, Ser-328, and Ser-330. Arg-347 bears the Omega-N-methylarginine mark. Residue Lys-358 forms a Glycyl lysine isopeptide (Lys-Gly) (interchain with G-Cter in SUMO2) linkage.

In terms of assembly, interacts with CSNK2B (via KSSR). Interacts with JUN; the interaction is mediated by CSNK2B. Phosphorylated at Ser-67 by AMPK. In skeletal muscle, phosphorylation is induced by exercise and seems to increase muscle contractile function. As to expression, expressed in skeletal muscle.

Its subcellular location is the nucleus. Its function is as follows. AMPK substrate important for exercise capacity and skeletal muscle function. Required for normal contraction-induced signaling. In terms of biological role, (Microbial infection) Upon Epstein-Barr virus (EBV) infection, suppresses viral BZLF1 expression and subsequent EBV reactivation by interacting with JUN and inhibiting its transcriptional activator activity on BZLF1 Z promoter. The chain is Protein ARK2N from Homo sapiens (Human).